A 180-amino-acid polypeptide reads, in one-letter code: uncharacterized protein (180 aa).

This is an uncharacterized protein from Methanocaldococcus jannaschii (strain ATCC 43067 / DSM 2661 / JAL-1 / JCM 10045 / NBRC 100440) (Methanococcus jannaschii).